We begin with the raw amino-acid sequence, 28 residues long: Cytochrome b6-f complex subunit 6 (28 aa).

Residues 2–22 (VEYLVILSGMFGLALACFFGL) form a helical membrane-spanning segment.

This sequence belongs to the PetL family. In terms of assembly, the 4 large subunits of the cytochrome b6-f complex are cytochrome b6, subunit IV (17 kDa polypeptide, PetD), cytochrome f and the Rieske protein, while the 4 small subunits are PetG, PetL, PetM and PetN. The complex functions as a dimer.

Its subcellular location is the plastid. It localises to the cyanelle thylakoid membrane. Its function is as follows. Component of the cytochrome b6-f complex, which mediates electron transfer between photosystem II (PSII) and photosystem I (PSI), cyclic electron flow around PSI, and state transitions. PetL is important for photoautotrophic growth as well as for electron transfer efficiency and stability of the cytochrome b6-f complex. This Cyanophora paradoxa protein is Cytochrome b6-f complex subunit 6.